The following is a 582-amino-acid chain: 2-succinyl-5-enolpyruvyl-6-hydroxy-3-cyclohexene-1-carboxylate synthase (582 aa).

This sequence belongs to the TPP enzyme family. MenD subfamily. As to quaternary structure, homodimer. It depends on Mg(2+) as a cofactor. The cofactor is Mn(2+). Thiamine diphosphate serves as cofactor.

The catalysed reaction is isochorismate + 2-oxoglutarate + H(+) = 5-enolpyruvoyl-6-hydroxy-2-succinyl-cyclohex-3-ene-1-carboxylate + CO2. The protein operates within quinol/quinone metabolism; 1,4-dihydroxy-2-naphthoate biosynthesis; 1,4-dihydroxy-2-naphthoate from chorismate: step 2/7. Its pathway is cofactor biosynthesis; phylloquinone biosynthesis. Catalyzes the thiamine diphosphate-dependent decarboxylation of 2-oxoglutarate and the subsequent addition of the resulting succinic semialdehyde-thiamine pyrophosphate anion to isochorismate to yield 2-succinyl-5-enolpyruvyl-6-hydroxy-3-cyclohexene-1-carboxylate (SEPHCHC). The protein is 2-succinyl-5-enolpyruvyl-6-hydroxy-3-cyclohexene-1-carboxylate synthase of Trichodesmium erythraeum (strain IMS101).